Reading from the N-terminus, the 422-residue chain is 5'-deoxyadenosine deaminase (422 aa).

H57 and H59 together coordinate Zn(2+). Substrate is bound by residues E86 and H178. H205 contacts Zn(2+). Substrate contacts are provided by E208 and D294. Position 294 (D294) interacts with Zn(2+).

This sequence belongs to the metallo-dependent hydrolases superfamily. MTA/SAH deaminase family. In terms of assembly, homotetramer. Requires Zn(2+) as cofactor.

It carries out the reaction 5'-deoxyadenosine + H2O + H(+) = 5'-deoxyinosine + NH4(+). The catalysed reaction is S-adenosyl-L-homocysteine + H2O + H(+) = S-inosyl-L-homocysteine + NH4(+). It catalyses the reaction S-methyl-5'-thioadenosine + H2O + H(+) = S-methyl-5'-thioinosine + NH4(+). The enzyme catalyses adenosine + H2O + H(+) = inosine + NH4(+). The protein operates within amino-acid biosynthesis; S-adenosyl-L-methionine biosynthesis. Catalyzes the deamination of three SAM-derived enzymatic products, namely 5'-deoxyadenosine, S-adenosyl-L-homocysteine, and 5'-methylthioadenosine, to produce the inosine analogs. Can also deaminate adenosine. The preferred substrate for this enzyme is 5'-deoxyadenosine, but all these substrates are efficiently deaminated. Likely functions in a S-adenosyl-L-methionine (SAM) recycling pathway from S-adenosyl-L-homocysteine (SAH) produced from SAM-dependent methylation reactions. May also be involved in the recycling of 5'-deoxyadenosine, whereupon the 5'-deoxyribose moiety of 5'-deoxyinosine is further metabolized to deoxyhexoses used for the biosynthesis of aromatic amino acids in methanogens. The protein is 5'-deoxyadenosine deaminase of Methanococcus vannielii (strain ATCC 35089 / DSM 1224 / JCM 13029 / OCM 148 / SB).